Reading from the N-terminus, the 123-residue chain is uncharacterized protein (123 aa).

Disordered stretches follow at residues 1–33 (MAPP…RRRK) and 82–123 (EKAA…EDKS). The span at 18–33 (KLFKRRRVLSRDRRRK) shows a compositional bias: basic residues.

This is an uncharacterized protein from Mus musculus (Mouse).